The sequence spans 440 residues: Chromosome partition protein MukF (440 aa).

A leucine-zipper region spans residues 208–236 (LSETSGTLRELQDTLEAAGDKLQANLLRI).

The protein belongs to the MukF family. Interacts, and probably forms a ternary complex, with MukE and MukB via its C-terminal region. The complex formation is stimulated by calcium or magnesium. It is required for an interaction between MukE and MukB.

The protein resides in the cytoplasm. Its subcellular location is the nucleoid. Functionally, involved in chromosome condensation, segregation and cell cycle progression. May participate in facilitating chromosome segregation by condensation DNA from both sides of a centrally located replisome during cell division. Not required for mini-F plasmid partitioning. Probably acts via its interaction with MukB and MukE. Overexpression results in anucleate cells. It has a calcium binding activity. The sequence is that of Chromosome partition protein MukF from Citrobacter koseri (strain ATCC BAA-895 / CDC 4225-83 / SGSC4696).